The primary structure comprises 229 residues: Leucyl/phenylalanyl-tRNA--protein transferase (229 aa).

The protein belongs to the L/F-transferase family.

The protein resides in the cytoplasm. It catalyses the reaction N-terminal L-lysyl-[protein] + L-leucyl-tRNA(Leu) = N-terminal L-leucyl-L-lysyl-[protein] + tRNA(Leu) + H(+). It carries out the reaction N-terminal L-arginyl-[protein] + L-leucyl-tRNA(Leu) = N-terminal L-leucyl-L-arginyl-[protein] + tRNA(Leu) + H(+). The catalysed reaction is L-phenylalanyl-tRNA(Phe) + an N-terminal L-alpha-aminoacyl-[protein] = an N-terminal L-phenylalanyl-L-alpha-aminoacyl-[protein] + tRNA(Phe). Functions in the N-end rule pathway of protein degradation where it conjugates Leu, Phe and, less efficiently, Met from aminoacyl-tRNAs to the N-termini of proteins containing an N-terminal arginine or lysine. This chain is Leucyl/phenylalanyl-tRNA--protein transferase, found in Desulforapulum autotrophicum (strain ATCC 43914 / DSM 3382 / VKM B-1955 / HRM2) (Desulfobacterium autotrophicum).